A 199-amino-acid chain; its full sequence is Charged multivesicular body protein 1B2 (199 aa).

A coiled-coil region spans residues 15–47 (AKELNRNAKKCDKEEKAEKAKIKKAIQKGNTEV). The interaction with IST1 stretch occupies residues 132–156 (MEDTMSSTTTLTTPQNQVDMLLQEM). The interval 167-199 (ELPQGQTGSVGASVASTEQDELSQRLARLRDQV) is disordered. A compositionally biased stretch (polar residues) spans 170 to 183 (QGQTGSVGASVAST). Positions 174–199 (GSVGASVASTEQDELSQRLARLRDQV) are interaction with SPAST. Residues 177–199 (GASVASTEQDELSQRLARLRDQV) adopt a coiled-coil conformation. The tract at residues 180-196 (VASTEQDELSQRLARLR) is interaction with VPS4A, MITD1 and STAMBP. An interaction with VTA1 region spans residues 180 to 199 (VASTEQDELSQRLARLRDQV). The segment at 183–199 (TEQDELSQRLARLRDQV) is interaction with VPS4B. The short motif at 186-196 (DELSQRLARLR) is the MIT-interacting motif element.

Belongs to the SNF7 family. As to quaternary structure, probable peripherally associated component of the endosomal sorting required for transport complex III (ESCRT-III). ESCRT-III components are thought to multimerize to form a flat lattice on the perimeter membrane of the endosome. Several assembly forms of ESCRT-III may exist that interact and act sequentially. Interacts with CHMP1A. Interacts with VTA1; the interaction probably involves the open conformation of CHMP1B. Interacts with CHMP2A. Interacts with VPS4A; the interaction is direct. Interacts with VPS4B; the interaction is direct. Interacts with SPAST (via MIT domain); the interaction is direct. Interacts with IST1. Interacts with MITD1. Interacts with STAMBP.

It is found in the cytoplasm. The protein localises to the cytosol. The protein resides in the endosome. Its subcellular location is the late endosome membrane. Functionally, probable peripherally associated component of the endosomal sorting required for transport complex III (ESCRT-III) which is involved in multivesicular bodies (MVBs) formation and sorting of endosomal cargo proteins into MVBs. MVBs contain intraluminal vesicles (ILVs) that are generated by invagination and scission from the limiting membrane of the endosome and mostly are delivered to lysosomes enabling degradation of membrane proteins, such as stimulated growth factor receptors, lysosomal enzymes and lipids. The MVB pathway appears to require the sequential function of ESCRT-O, -I,-II and -III complexes. ESCRT-III proteins mostly dissociate from the invaginating membrane before the ILV is released. The ESCRT machinery also functions in topologically equivalent membrane fission events, such as the terminal stages of cytokinesis. ESCRT-III proteins are believed to mediate the necessary vesicle extrusion and/or membrane fission activities, possibly in conjunction with the AAA ATPase VPS4. Involved in cytokinesis. Involved in recruiting VPS4A and/or VPS4B and SPAST to the midbody of dividing cells. This is Charged multivesicular body protein 1B2 from Mus musculus (Mouse).